A 196-amino-acid polypeptide reads, in one-letter code: Charged multivesicular body protein 1a (196 aa).

Methionine 1 carries the post-translational modification N-acetylmethionine. Positions 5–42 (LFQLKFTAKQLEKLAKKAEKDSKAEQAKVKKALQQKNV) form a coiled coil. The residue at position 101 (serine 101) is a Phosphoserine. A coiled-coil region spans residues 102–124 (AMDLQKVSAVMDRFEQQVQNLDV). Position 173 is a phosphoserine (serine 173). Residues 185 to 195 (DQLSRRLAALR) carry the MIT-interacting motif motif.

This sequence belongs to the SNF7 family. In terms of assembly, probable peripherally associated component of the endosomal sorting required for transport complex III (ESCRT-III). ESCRT-III components are thought to multimerize to form a flat lattice on the perimeter membrane of the endosome. Several assembly forms of ESCRT-III may exist that interact and act sequentially. Self-associates. Interacts with CHMP1B. Interacts with VPS4A. Interacts with VPS4B. Interacts with PHF1. Interacts with IST1. Interacts with MITD1. As to expression, highly expressed in adult heart, kidney and liver. Expressed at lower levels in adult colon, spleen, lung, brain, testis and muscle. Also expressed in myoblasts and embryo fibroblasts.

Its subcellular location is the cytoplasm. The protein localises to the endosome membrane. It is found in the nucleus matrix. Probable peripherally associated component of the endosomal sorting required for transport complex III (ESCRT-III) which is involved in multivesicular bodies (MVBs) formation and sorting of endosomal cargo proteins into MVBs. MVBs contain intraluminal vesicles (ILVs) that are generated by invagination and scission from the limiting membrane of the endosome and mostly are delivered to lysosomes enabling degradation of membrane proteins, such as stimulated growth factor receptors, lysosomal enzymes and lipids. The MVB pathway appears to require the sequential function of ESCRT-O, -I,-II and -III complexes. ESCRT-III proteins mostly dissociate from the invaginating membrane before the ILV is released. The ESCRT machinery also functions in topologically equivalent membrane fission events, such as the terminal stages of cytokinesis. ESCRT-III proteins are believed to mediate the necessary vesicle extrusion and/or membrane fission activities, possibly in conjunction with the AAA ATPase VPS4. Involved in cytokinesis. Involved in recruiting VPS4A and/or VPS4B to the midbody of dividing cells. May also be involved in chromosome condensation. Targets the Polycomb group (PcG) protein BMI1/PCGF4 to regions of condensed chromatin. May play a role in stable cell cycle progression and in PcG gene silencing. The protein is Charged multivesicular body protein 1a (Chmp1a) of Mus musculus (Mouse).